Here is a 599-residue protein sequence, read N- to C-terminus: uncharacterized protein (599 aa).

Over residues 1–13 (MSSSSSHNSFSGS) the composition is skewed to low complexity. 2 disordered regions span residues 1 to 27 (MSSS…IDGL) and 41 to 86 (YPSN…DDTN). The segment covering 14–27 (KTNAAEGQNSIDGL) has biased composition (polar residues). Residues 44–70 (NEEKEVKETDIVPDENKVNELDVHKQS) are compositionally biased toward basic and acidic residues. A run of 14 helical transmembrane segments spans residues 97 to 117 (IVVP…TIVT), 135 to 155 (WIGS…GVFC), 162 to 182 (IVLY…GASQ), 192 to 212 (AIQG…ISDI), 223 to 243 (GILA…GGAI), 251 to 271 (WIFF…VVFL), 290 to 310 (FIGL…ISLG), 321 to 341 (ILCY…YDTF), 359 to 379 (AALL…AYYV), 396 to 416 (VHTI…GMVL), 423 to 443 (LPLI…MICV), 452 to 472 (VMGL…PPLI), 489 to 509 (TLMF…EVIF), and 552 to 572 (VIWI…FFIK).

Belongs to the major facilitator superfamily. TCR/Tet family.

Its subcellular location is the membrane. This is an uncharacterized protein from Schizosaccharomyces pombe (strain 972 / ATCC 24843) (Fission yeast).